The primary structure comprises 398 residues: Phosphoglycerate kinase (398 aa).

Residues 23 to 25 (DLN), Arg38, 61 to 64 (HFGR), Arg120, and Arg153 each bind substrate. Residues Lys203, Glu325, and 355–358 (GGDT) contribute to the ATP site.

This sequence belongs to the phosphoglycerate kinase family. In terms of assembly, monomer.

It localises to the cytoplasm. It carries out the reaction (2R)-3-phosphoglycerate + ATP = (2R)-3-phospho-glyceroyl phosphate + ADP. It functions in the pathway carbohydrate degradation; glycolysis; pyruvate from D-glyceraldehyde 3-phosphate: step 2/5. The chain is Phosphoglycerate kinase from Chelativorans sp. (strain BNC1).